A 130-amino-acid polypeptide reads, in one-letter code: Movement protein TGB2 (130 aa).

Topologically, residues 1-12 (MPGLTPPVNYEQ) are cytoplasmic. Residues 13-30 (VYKVLAIGFLLCASIYCL) form a helical membrane-spanning segment. Residues 31–72 (RSNHLPHVGDNIHSLPHGGNYADGTKRVQYFRPHSSTSTNHK) lie on the Lumenal side of the membrane. A helical transmembrane segment spans residues 73–90 (YTALCAVLTLSLLIFAQT). Residues 91 to 130 (RLAAGNRITSVSICHHCSSQGSLSGGNHGRVSGHSELPTT) are Cytoplasmic-facing. The segment at 110–130 (QGSLSGGNHGRVSGHSELPTT) is disordered.

Belongs to the Tymovirales TGBp2 protein family.

The protein resides in the host endoplasmic reticulum membrane. Plays a role in viral cell-to-cell propagation, by facilitating genome transport to neighboring plant cells through plasmosdesmata,. This is Movement protein TGB2 from Narcissus pseudonarcissus (Daffodil).